Consider the following 349-residue polypeptide: GDP-mannose:glycolipid 4-beta-D-mannosyltransferase (349 aa).

A signal peptide spans 1-14 (MSASASLPVTRAAA).

It belongs to the glycosyltransferase 94 family.

Its subcellular location is the cell inner membrane. The catalysed reaction is beta-D-GlcA-(1-&gt;2)-alpha-D-Man-(1-&gt;3)-beta-D-Glc-(1-&gt;4)-alpha-D-Glc-di-trans,octa-cis-undecaprenyl diphosphate + GDP-alpha-D-mannose = beta-D-Man-(1-&gt;4)-beta-D-GlcA-(1-&gt;2)-alpha-D-Man-(1-&gt;3)-beta-D-Glc-(1-&gt;4)-alpha-D-Glc-di-trans,octa-cis-undecaprenyl diphosphate + GDP + H(+). Its pathway is glycan biosynthesis; xanthan biosynthesis. Its function is as follows. Nonprocessive beta-mannosyltransferase that catalyzes the transfer of a mannose residue from GDP-mannose to glucuronic acid-beta-1,2-mannose-alpha-1,3-glucose-beta-1,4-glucose-PP-polyisoprenyl to form the lipid-linked pentasaccharide repeating unit of xanthan, Man-GlcA-Man-Glc(2)-PP-Pol. Is involved in the biosynthesis of the exopolysaccharide xanthan. The protein is GDP-mannose:glycolipid 4-beta-D-mannosyltransferase (gumI) of Xanthomonas campestris pv. campestris (strain ATCC 33913 / DSM 3586 / NCPPB 528 / LMG 568 / P 25).